An 85-amino-acid chain; its full sequence is YcgL domain-containing protein PC1_1941 (85 aa).

The YcgL domain maps to Met-1–Val-85.

The protein is YcgL domain-containing protein PC1_1941 of Pectobacterium carotovorum subsp. carotovorum (strain PC1).